We begin with the raw amino-acid sequence, 421 residues long: Tyrosine-protein phosphatase non-receptor type 20 (421 aa).

The tract at residues 1 to 58 (MSSPGNVRQKHGRDNDEHEGDSDDLNLQKSLPSSSQQKTPTKPVFGNKVNSESVKTSH) is disordered. Over residues 27–41 (LQKSLPSSSQQKTPT) the composition is skewed to low complexity. Residues 48–58 (KVNSESVKTSH) are compositionally biased toward polar residues. Phosphoserine is present on serine 76. The segment at 93–116 (RWSSVDPESAGPSKTVSTVLSESS) is disordered. Residues 104–116 (PSKTVSTVLSESS) show a composition bias toward polar residues. Serine 122 carries the phosphoserine modification. The Tyrosine-protein phosphatase domain occupies 160–413 (IIREFLELEE…QFCYEIVLEV (254 aa)). Residues aspartate 324, 354-360 (CSAGVGR), and glutamine 398 contribute to the substrate site. Residue cysteine 354 is the Phosphocysteine intermediate of the active site.

This sequence belongs to the protein-tyrosine phosphatase family. Non-receptor class subfamily.

It is found in the nucleus. It localises to the cytoplasm. The protein localises to the cytoskeleton. Its subcellular location is the microtubule organizing center. The protein resides in the centrosome. The enzyme catalyses O-phospho-L-tyrosyl-[protein] + H2O = L-tyrosyl-[protein] + phosphate. Its function is as follows. Tyrosine-protein phosphatase targeted to sites of actin polymerization in response of varied extracellular stimuli. Has tyrosine phosphatase activity towards various tyrosyl phosphorylated substrates. In Rattus norvegicus (Rat), this protein is Tyrosine-protein phosphatase non-receptor type 20 (Ptpn20).